A 205-amino-acid polypeptide reads, in one-letter code: Probable nicotinate-nucleotide adenylyltransferase (205 aa).

Belongs to the NadD family.

The catalysed reaction is nicotinate beta-D-ribonucleotide + ATP + H(+) = deamido-NAD(+) + diphosphate. The protein operates within cofactor biosynthesis; NAD(+) biosynthesis; deamido-NAD(+) from nicotinate D-ribonucleotide: step 1/1. Functionally, catalyzes the reversible adenylation of nicotinate mononucleotide (NaMN) to nicotinic acid adenine dinucleotide (NaAD). The polypeptide is Probable nicotinate-nucleotide adenylyltransferase (Arthrobacter sp. (strain FB24)).